A 300-amino-acid chain; its full sequence is MEKTQETVQRILLEPYKYLLQLPGKQVRTKLSQAFNHWLKVPEDKLQIIIEVTEMLHNASLLIDDIEDNSKLRRGFPVAHSIYGIPSVINSANYVYFLGLEKVLTLDHPDAVKLFTRQLLELHQGQGLDIYWRDNYTCPTEEEYKAMVLQKTGGLFGLAVGLMQLFSDYKEDLKPLLNTLGLFFQIRDDYANLHSKEYSENKSFCEDLTEGKFSFPTIHAIWSRPESTQVQNILRQRTENIDIKKYCVHYLEDVGSFEYTRNTLKELEAKAYKQIDARGGNPELVALVKHLSKMFKEENE.

Methionine 1 carries the post-translational modification N-acetylmethionine. Positions 25, 28, and 57 each coordinate isopentenyl diphosphate. Mg(2+) is bound by residues aspartate 64 and aspartate 68. Residue arginine 73 coordinates dimethylallyl diphosphate. Arginine 74 provides a ligand contact to isopentenyl diphosphate. Lysine 151, threonine 152, glutamine 185, lysine 202, and lysine 212 together coordinate dimethylallyl diphosphate.

It belongs to the FPP/GGPP synthase family. Homohexamer; trimer of homodimers. Requires Mg(2+) as cofactor. In terms of tissue distribution, abundantly expressed in testis. Found in other tissues to a lower extent. Expressed in dermal fibroblast and skeletal muscle.

The protein localises to the cytoplasm. It localises to the perinuclear region. Its subcellular location is the myofibril. The protein resides in the sarcomere. It is found in the z line. The catalysed reaction is isopentenyl diphosphate + dimethylallyl diphosphate = (2E)-geranyl diphosphate + diphosphate. It catalyses the reaction isopentenyl diphosphate + (2E)-geranyl diphosphate = (2E,6E)-farnesyl diphosphate + diphosphate. The enzyme catalyses isopentenyl diphosphate + (2E,6E)-farnesyl diphosphate = (2E,6E,10E)-geranylgeranyl diphosphate + diphosphate. It functions in the pathway isoprenoid biosynthesis; farnesyl diphosphate biosynthesis; farnesyl diphosphate from geranyl diphosphate and isopentenyl diphosphate: step 1/1. It participates in isoprenoid biosynthesis; geranyl diphosphate biosynthesis; geranyl diphosphate from dimethylallyl diphosphate and isopentenyl diphosphate: step 1/1. Its pathway is isoprenoid biosynthesis; geranylgeranyl diphosphate biosynthesis; geranylgeranyl diphosphate from farnesyl diphosphate and isopentenyl diphosphate: step 1/1. With respect to regulation, subject to product inhibition by geranylgeranyl diphosphate. Functionally, catalyzes the trans-addition of the three molecules of IPP onto DMAPP to form geranylgeranyl pyrophosphate, an important precursor of carotenoids and geranylated proteins. This chain is Geranylgeranyl pyrophosphate synthase (GGPS1), found in Homo sapiens (Human).